We begin with the raw amino-acid sequence, 409 residues long: Protein PHOSPHATE STARVATION RESPONSE 1 (409 aa).

Basic and acidic residues predominate over residues 1–15 (MEARPVHRSGSRDLT). 3 disordered regions span residues 1–42 (MEAR…NSQL), 86–108 (EKQQHYTGSSSNNAVQTPSNNDS), and 178–226 (ETNS…TGKA). Polar residues-rich tracts occupy residues 16-26 (RTSSIPSTQKP) and 90-108 (HYTGSSSNNAVQTPSNNDS). Low complexity predominate over residues 192–224 (QIPQPQIVQQQPSPSVELRPVSTTSSNSNNGTG). The HTH myb-type domain maps to 222-282 (GTGKARMRWT…HLQKYRTARY (61 aa)). Positions 253 to 278 (PKGVLKIMKVEGLTIYHVKSHLQKYR) form a DNA-binding region, H-T-H motif. Positions 314–334 (TEALRLQMEVQKQLHEQLEIQ) form a coiled coil. The LHEQLE motif lies at 327–332 (LHEQLE). A compositionally biased stretch (polar residues) spans 358-370 (GLTKGTASTSDSA). The disordered stretch occupies residues 358 to 409 (GLTKGTASTSDSAAKSEQEDKKTADSKEVPEEETRKCEELESPQPKRPKIDN). Basic and acidic residues predominate over residues 371–396 (AKSEQEDKKTADSKEVPEEETRKCEE). At S399 the chain carries Phosphoserine.

The protein belongs to the MYB-CC family. As to quaternary structure, homodimers and heterodimers. Interacts with SPX1 in a Pi-dependent manner. Does not interact with PHL2 or PHL3. Sumoylated by SIZ1. Sumoylation controls phosphate deficiency responses.

Its subcellular location is the nucleus. Functionally, transcription factor involved in phosphate starvation signaling. Binds as a dimer to P1BS, an imperfect palindromic sequence 5'-GNATATNC-3', to promote the expression of inorganic phosphate (Pi) starvation-responsive genes. SPX1 is a competitive inhibitor of this DNA-binding. PHR1 binding to its targets is low Pi-dependent. Regulates the expression of miR399. Regulates the expression of IPS1 (At3g09922), a non-coding RNA that mimics the target of miR399 to block the cleavage of PHO2 under Pi-deficient conditions. Regulates lipid remodeling and triacylglycerol accumulation during phosphorus starvation. Required for the shoot-specific hypoxic response. Regulates FER1 expression upon phosphate starvation, linking iron and phosphate homeostasis. Contributes to the homeostasis of both sulfate and phosphate in plants under phosphate deficiency. Required for adaptation to high light and retaining functional photosynthesis during phosphate starvation. Involved in the coregulation of Zn and Pi homeostasis. In Arabidopsis thaliana (Mouse-ear cress), this protein is Protein PHOSPHATE STARVATION RESPONSE 1.